The chain runs to 111 residues: Resistin-like beta (111 aa).

The signal sequence occupies residues 1 to 23; the sequence is MGPSSCLLLILIPLLQLINPGST. 5 disulfides stabilise this stretch: Cys-55-Cys-108, Cys-67-Cys-107, Cys-76-Cys-93, Cys-78-Cys-95, and Cys-82-Cys-97.

This sequence belongs to the resistin/FIZZ family. As to quaternary structure, homodimer; disulfide-linked. In terms of tissue distribution, expressed only in the gastrointestinal tract, particularly the colon.

The protein resides in the secreted. Probable hormone. This chain is Resistin-like beta (RETNLB), found in Homo sapiens (Human).